Reading from the N-terminus, the 608-residue chain is Myosin light chain kinase 2, skeletal/cardiac muscle (608 aa).

The segment at 1 to 160 is disordered; that stretch reads MATENGAVEL…RGSPAFLHSP (160 aa). Alanine 2 bears the N-acetylalanine mark. Basic and acidic residues-rich tracts occupy residues 31 to 43 and 50 to 63; these read AAEK…DPEK and TKQD…KKDA. Over residues 82–91 the composition is skewed to gly residues; the sequence is GSQGPAGEGG. The segment covering 116-127 has biased composition (basic and acidic residues); sequence ASEKKPEAEKGP. Phosphoserine occurs at positions 153, 159, and 161. The disordered stretch occupies residues 214 to 235; the sequence is QKEAGEKAPGQADQAKVQGDTS. The Protein kinase domain occupies 297 to 552; sequence MNSKEALGGG…AAQCLAHPWL (256 aa). ATP contacts are provided by residues 303 to 311 and lysine 326; that span reads LGGGKFGAV. Aspartate 418 functions as the Proton acceptor in the catalytic mechanism. Threonine 457 carries the post-translational modification Phosphothreonine. The interval 586–598 is calmodulin-binding; sequence IAVSAANRFKKIS.

This sequence belongs to the protein kinase superfamily. CAMK Ser/Thr protein kinase family. May interact with centrin.

It localises to the cytoplasm. The enzyme catalyses L-seryl-[myosin light chain] + ATP = O-phospho-L-seryl-[myosin light chain] + ADP + H(+). It catalyses the reaction L-threonyl-[myosin light chain] + ATP = O-phospho-L-threonyl-[myosin light chain] + ADP + H(+). Its function is as follows. Implicated in the level of global muscle contraction and cardiac function. Phosphorylates a specific serine in the N-terminus of a myosin light chain. The protein is Myosin light chain kinase 2, skeletal/cardiac muscle (MYLK2) of Oryctolagus cuniculus (Rabbit).